A 1680-amino-acid polypeptide reads, in one-letter code: GRIP and coiled-coil domain-containing protein 2 (1680 aa).

Position 1 is an N-acetylmethionine (M1). A compositionally biased stretch (low complexity) spans 1–14 (MEDSAPDAVAAAPS). 2 disordered regions span residues 1-23 (MEDS…KLET) and 1468-1522 (KSEP…SSAG). A coiled-coil region spans residues 31-1614 (KFAKKQMMLL…REKSVANLEY (1584 aa)). Residues 1469-1484 (SEPSTRSPASSHQPSK) show a composition bias toward polar residues. Phosphoserine occurs at positions 1475 and 1479. The interval 1570–1609 (HLNGLLRETEATNAILMEQIKLLKSEIRRLERNQEREKSV) is mediates interaction with RAB6A. The tract at residues 1570–1680 (HLNGLLRETE…SYLHSWSGLR (111 aa)) is mediates interaction with RAB9A. Residues 1605 to 1655 (REKSVANLEYLKNVLLRFIFLKPGSERERLLPVIDTMLQLSPEEKGKLATV) enclose the GRIP domain.

As to quaternary structure, homodimer. Interacts (via GRIP domain) with RAB6A (preferentially in its GTP-bound form). May interact (RAB6A-dependent) with ARL1; might be involved in GCC2 Golgi localization. Interacts (probably via GRIP domain) with RAB9A (preferentially in its GTP-bound form). Interacts with CLASP1 and CLASP2; recruits both proteins to membranes of the TGN. Interacts with STX16.

The protein resides in the cytoplasm. It is found in the golgi apparatus. It localises to the trans-Golgi network membrane. Its function is as follows. Golgin which probably tethers transport vesicles to the trans-Golgi network (TGN) and regulates vesicular transport between the endosomes and the Golgi. As a RAB9A effector it is involved in recycling of the mannose 6-phosphate receptor from the late endosomes to the TGN. May also play a role in transport between the recycling endosomes and the Golgi. Required for maintenance of the Golgi structure, it is involved in the biogenesis of noncentrosomal, Golgi-associated microtubules through recruitment of CLASP1 and CLASP2. In Mus musculus (Mouse), this protein is GRIP and coiled-coil domain-containing protein 2 (Gcc2).